We begin with the raw amino-acid sequence, 712 residues long: Polyadenylation factor subunit 2 (712 aa).

The tract at residues 1-37 is disordered; sequence MTAPTVPADQHGHPLPGPADPAANDTWRPSRYREPLH. WD repeat units lie at residues 131-170, 173-213, 214-253, 256-295, 298-337, 340-380, and 387-426; these read KERS…YESI, VHDD…HGFQ, GHRE…EERS, GHGW…DLST, SSKS…ELEV, GHEK…PSTP, and AHED…GGQE. 2 disordered regions span residues 446 to 473 and 489 to 712; these read TKRE…KQQV and KTGP…DGRR. Gly residues-rich tracts occupy residues 460–469 and 494–504; these read AGGGGGGGGD and TTGGGPSGLPG. The span at 533–545 shows a compositional bias: low complexity; sequence QGQAQGGQFPRGR. The span at 565-592 shows a compositional bias: basic and acidic residues; the sequence is FADRDRNGGGDRGGMDRDRDSRGGRQDP. Composition is skewed to pro residues over residues 603-612 and 619-671; these read GGPPPGPPPG and PPAP…PQGP. Over residues 678-712 the composition is skewed to gly residues; that stretch reads GGQGNYGASASGGYGQYGGGGGGGGGGGYGRDGRR.

Its subcellular location is the nucleus. Required for 3'-end cleavage and polyadenylation of pre-mRNAs. Also involved in chromosome segregation where it has a role in chromosome attachment to the mitotic spindle. The sequence is that of Polyadenylation factor subunit 2 (PFS2) from Cryptococcus neoformans var. neoformans serotype D (strain JEC21 / ATCC MYA-565) (Filobasidiella neoformans).